The sequence spans 303 residues: Probable 5-dehydro-4-deoxyglucarate dehydratase (303 aa).

This sequence belongs to the DapA family.

It catalyses the reaction 5-dehydro-4-deoxy-D-glucarate + H(+) = 2,5-dioxopentanoate + CO2 + H2O. It functions in the pathway carbohydrate acid metabolism; D-glucarate degradation; 2,5-dioxopentanoate from D-glucarate: step 2/2. In Acinetobacter baumannii (strain AB307-0294), this protein is Probable 5-dehydro-4-deoxyglucarate dehydratase.